Here is a 219-residue protein sequence, read N- to C-terminus: Large ribosomal subunit protein uL16y (219 aa).

The protein belongs to the universal ribosomal protein uL16 family. In terms of assembly, component of the small ribosomal subunit. Mature ribosomes consist of a small (40S) and a large (60S) subunit. The 40S subunit contains about 33 different proteins and 1 molecule of RNA (18S). The 60S subunit contains about 49 different proteins and 3 molecules of RNA (25S, 5.8S and 5S).

The protein is Large ribosomal subunit protein uL16y (SG12) of Oryza sativa subsp. japonica (Rice).